The chain runs to 499 residues: DNA-directed RNA polymerase subunit Rpo2N (499 aa).

This sequence belongs to the RNA polymerase beta chain family. Part of the RNA polymerase complex.

Its subcellular location is the cytoplasm. It catalyses the reaction RNA(n) + a ribonucleoside 5'-triphosphate = RNA(n+1) + diphosphate. DNA-dependent RNA polymerase (RNAP) catalyzes the transcription of DNA into RNA using the four ribonucleoside triphosphates as substrates. The Rpo2 subunit (Rpo2N and Rpo2C in this organism) is implicated in DNA promoter recognition and in nucleotide binding. The protein is DNA-directed RNA polymerase subunit Rpo2N of Methanococcus vannielii (strain ATCC 35089 / DSM 1224 / JCM 13029 / OCM 148 / SB).